The primary structure comprises 381 residues: Dual-specificity RNA methyltransferase RlmN (381 aa).

The Proton acceptor role is filled by Glu95. Residues Asp101–Asp339 form the Radical SAM core domain. Residues Cys108 and Cys345 are joined by a disulfide bond. Positions 115, 119, and 122 each coordinate [4Fe-4S] cluster. Residues Gly169 to Glu170, Ser201, Ser223 to His225, and Asn302 contribute to the S-adenosyl-L-methionine site. Cys345 acts as the S-methylcysteine intermediate in catalysis.

This sequence belongs to the radical SAM superfamily. RlmN family. [4Fe-4S] cluster is required as a cofactor.

Its subcellular location is the cytoplasm. It carries out the reaction adenosine(2503) in 23S rRNA + 2 reduced [2Fe-2S]-[ferredoxin] + 2 S-adenosyl-L-methionine = 2-methyladenosine(2503) in 23S rRNA + 5'-deoxyadenosine + L-methionine + 2 oxidized [2Fe-2S]-[ferredoxin] + S-adenosyl-L-homocysteine. It catalyses the reaction adenosine(37) in tRNA + 2 reduced [2Fe-2S]-[ferredoxin] + 2 S-adenosyl-L-methionine = 2-methyladenosine(37) in tRNA + 5'-deoxyadenosine + L-methionine + 2 oxidized [2Fe-2S]-[ferredoxin] + S-adenosyl-L-homocysteine. Specifically methylates position 2 of adenine 2503 in 23S rRNA and position 2 of adenine 37 in tRNAs. m2A2503 modification seems to play a crucial role in the proofreading step occurring at the peptidyl transferase center and thus would serve to optimize ribosomal fidelity. The protein is Dual-specificity RNA methyltransferase RlmN of Alcanivorax borkumensis (strain ATCC 700651 / DSM 11573 / NCIMB 13689 / SK2).